A 575-amino-acid chain; its full sequence is Centrosomal protein POC5 (575 aa).

The segment at 1–26 is disordered; sequence MSSDEEKYSLPVVQNDSSRGSSVSSN. 2 positions are modified to phosphoserine: serine 105 and serine 109. A Centrin-binding (CBR) 1 repeat occupies 142 to 173; it reads HEILVSDFLVSDENLQKMENVLDLWSSGLKTN. A coiled-coil region spans residues 191 to 222; sequence MEMRKEKEKHAAHLKQLCNQINELKELQKTFE. Centrin-binding (CBR) repeat units lie at residues 231 to 262 and 263 to 295; these read VISS…HVRA and RQDV…VQKQ. A coiled-coil region spans residues 316–355; it reads SNDYEAKVAMLSGALENAKAEIQRMQHEKEHFEDSMKKAF. Disordered stretches follow at residues 376–411 and 538–575; these read AGID…MPLP and KYPR…KVVD. The segment covering 382 to 400 has biased composition (basic and acidic residues); sequence NNKKEEYGPGVQGKEHSAH. Lysine 538 is subject to N6-acetyllysine. Residues 545–569 show a composition bias toward polar residues; it reads PESSTSASRSLGTRSAHTQSLTSVH. Position 564 is a phosphoserine (serine 564).

It belongs to the POC5 family. Interacts with CETN2 and CETN3. Forms a microtubule-associated complex with POC1B, CETN2 and FAM161A. Interacts with CCDC15. Hyperphosphorylated during recruitment to procentrioles in G2/M phase.

It is found in the cytoplasm. The protein resides in the cytoskeleton. The protein localises to the microtubule organizing center. It localises to the centrosome. Its subcellular location is the centriole. Functionally, essential for the assembly of the distal half of centrioles, required for centriole elongation. Acts as a negative regulator of centriole elongation. The polypeptide is Centrosomal protein POC5 (POC5) (Homo sapiens (Human)).